Here is a 264-residue protein sequence, read N- to C-terminus: Sec-independent protein translocase protein TatC (264 aa).

The next 6 helical transmembrane spans lie at 20–40, 85–105, 131–151, 175–195, 211–231, and 232–252; these read VVVITGAVTAFLLAFHAEPAE, FFAQVYIAALVGVTVSTPVAV, AVGLFAAGCAFSYIVVIPYIL, FVLQFLLAFGISFQLPLVMFA, IRYALLGIVIFGAAITPDGSG, and VTMWFVAGPMIGLYFAGMFFA.

It belongs to the TatC family. Forms a complex with TatA.

The protein resides in the cell membrane. Part of the twin-arginine translocation (Tat) system that transports large folded proteins containing a characteristic twin-arginine motif in their signal peptide across membranes. This Cenarchaeum symbiosum (strain A) protein is Sec-independent protein translocase protein TatC.